The sequence spans 457 residues: Methylenetetrahydrofolate--tRNA-(uracil-5-)-methyltransferase TrmFO (457 aa).

8–13 (GGGLAG) lines the FAD pocket.

This sequence belongs to the MnmG family. TrmFO subfamily. The cofactor is FAD.

It localises to the cytoplasm. The enzyme catalyses uridine(54) in tRNA + (6R)-5,10-methylene-5,6,7,8-tetrahydrofolate + NADH + H(+) = 5-methyluridine(54) in tRNA + (6S)-5,6,7,8-tetrahydrofolate + NAD(+). It catalyses the reaction uridine(54) in tRNA + (6R)-5,10-methylene-5,6,7,8-tetrahydrofolate + NADPH + H(+) = 5-methyluridine(54) in tRNA + (6S)-5,6,7,8-tetrahydrofolate + NADP(+). Catalyzes the folate-dependent formation of 5-methyl-uridine at position 54 (M-5-U54) in all tRNAs. This is Methylenetetrahydrofolate--tRNA-(uracil-5-)-methyltransferase TrmFO from Thermosynechococcus vestitus (strain NIES-2133 / IAM M-273 / BP-1).